Consider the following 421-residue polypeptide: MEFPFDVDALFPERITVLDQHLRPPARRPGTTTPARVDLQQQIMTIVDELGKASAKAQHLPAPITSALRMQSNRHVIYVLKDTSARPAGKGAIIGFLKVGYKKLFVLDDREAHNEVEPLCILDFYIHESVQRHGHGRELFQYMLQKERVEPHQLAIDRPSPKLLKFLNKHYNLETTVPQVNNFVIFEGFFAHQHRSPTPSLRATRHSRAAVVDPIPAAPARKLPPKRAEGDIKPYSSSDREFLKVAVEPPWPLNRAPRRATPPAHPPPRSSSLGNSPDRGPLRPFVPEQELLRSLRLCPPHPTARLLLATDPGGSPAQRRRTRETPWGLVAQSCHYSRHGGFNTSFLGTGNQERKQGEQEAEDRSASEDQVLLQDGSGEEPTHTVAPRAQAPPAQSWMVGGDILNARVIRNLQERRNTRPW.

In terms of domain architecture, N-acetyltransferase spans Met1–Phe190. Lys56 carries the N6-acetyllysine; by autocatalysis modification. Residue Phe124–Arg137 coordinates acetyl-CoA. Lys146 carries the N6-acetyllysine; by autocatalysis modification. Ser160 to Lys169 provides a ligand contact to acetyl-CoA. Residues Pro214–Tyr235 are disordered. A compositionally biased stretch (basic and acidic residues) spans Lys226–Tyr235. Residues Lys233 and Lys244 each carry the N6-acetyllysine; by autocatalysis modification. A disordered region spans residues Pro252–Pro284. Phosphoserine occurs at positions 272 and 276. Position 305 is an asymmetric dimethylarginine (Arg305). Ser315 is modified (phosphoserine). Position 323 is an omega-N-methylarginine (Arg323). Residues Phe342–Asn351 show a composition bias toward polar residues. The segment at Phe342–Met398 is disordered. A compositionally biased stretch (basic and acidic residues) spans Gln352–Ser367.

Belongs to the acetyltransferase ATAT1 family. Component of the BBSome complex. Interacts with AP2 alpha-adaptins, including AP2A2, but not with AP1 gamma-adaptin (AP1G1/AP1G2); this interaction is required for efficient alpha-tubulin acetylation, hence clathrin-coated pits are sites of microtubule acetylation. Post-translationally, autoacetylation strongly increases tubulin acetylation.

It localises to the cytoplasm. The protein localises to the membrane. It is found in the clathrin-coated pit. The protein resides in the cell junction. Its subcellular location is the focal adhesion. It localises to the cell projection. The protein localises to the axon. It is found in the cytoskeleton. The protein resides in the spindle. The catalysed reaction is L-lysyl-[alpha-tubulin] + acetyl-CoA = N(6)-acetyl-L-lysyl-[alpha-tubulin] + CoA + H(+). Functionally, specifically acetylates 'Lys-40' in alpha-tubulin on the lumenal side of microtubules. Promotes microtubule destabilization and accelerates microtubule dynamics; this activity may be independent of acetylation activity. Acetylates alpha-tubulin with a slow enzymatic rate, due to a catalytic site that is not optimized for acetyl transfer. Enters the microtubule through each end and diffuses quickly throughout the lumen of microtubules. Acetylates only long/old microtubules because of its slow acetylation rate since it does not have time to act on dynamically unstable microtubules before the enzyme is released. Required for normal sperm flagellar function. Promotes directional cell locomotion and chemotaxis, through AP2A2-dependent acetylation of alpha-tubulin at clathrin-coated pits that are concentrated at the leading edge of migrating cells. May facilitate primary cilium assembly. This chain is Alpha-tubulin N-acetyltransferase 1, found in Rattus norvegicus (Rat).